Reading from the N-terminus, the 122-residue chain is Small ribosomal subunit protein uS12 (122 aa).

Position 89 is a 3-methylthioaspartic acid (aspartate 89).

It belongs to the universal ribosomal protein uS12 family. Part of the 30S ribosomal subunit. Contacts proteins S8 and S17. May interact with IF1 in the 30S initiation complex.

Its function is as follows. With S4 and S5 plays an important role in translational accuracy. Interacts with and stabilizes bases of the 16S rRNA that are involved in tRNA selection in the A site and with the mRNA backbone. Located at the interface of the 30S and 50S subunits, it traverses the body of the 30S subunit contacting proteins on the other side and probably holding the rRNA structure together. The combined cluster of proteins S8, S12 and S17 appears to hold together the shoulder and platform of the 30S subunit. In Corynebacterium glutamicum (strain R), this protein is Small ribosomal subunit protein uS12.